Consider the following 310-residue polypeptide: Protoheme IX farnesyltransferase 2 (310 aa).

A run of 9 helical transmembrane segments spans residues 21 to 41 (IWYL…GIYG), 46 to 66 (IATW…ANVL), 99 to 119 (FGLF…LTTT), 125 to 145 (WAAA…SYML), 153 to 173 (IVLG…AVTT), 180 to 200 (GLVM…ALTL), 226 to 246 (VIAV…LITL), 256 to 276 (VYLA…AWVV), and 284 to 304 (AWVL…ALMV).

This sequence belongs to the UbiA prenyltransferase family. Protoheme IX farnesyltransferase subfamily.

It localises to the cell membrane. It catalyses the reaction heme b + (2E,6E)-farnesyl diphosphate + H2O = Fe(II)-heme o + diphosphate. Its pathway is porphyrin-containing compound metabolism; heme O biosynthesis; heme O from protoheme: step 1/1. In terms of biological role, converts heme B (protoheme IX) to heme O by substitution of the vinyl group on carbon 2 of heme B porphyrin ring with a hydroxyethyl farnesyl side group. This is Protoheme IX farnesyltransferase 2 from Cenarchaeum symbiosum (strain A).